The sequence spans 1546 residues: Lysophospholipase NTE1 (1546 aa).

Residues 1 to 45 (MKDSTEALNSIAFAVDTTLSSILPSSLAPPSAPPATSSFLKSIWY) lie on the Cytoplasmic side of the membrane. Residues 46-66 (AFWWLWSMVVFKIMNIILLYI) traverse the membrane as a helical segment. At 67–81 (PSKIMNALSINFEIT) the chain is on the lumenal side. The helical transmembrane segment at 82-102 (LNLSSILVALSAIITVCFLVV) threads the bilayer. The Cytoplasmic portion of the chain corresponds to 103-1546 (RYKYLTGYSK…KKVLYRRNSI (1444 aa)). Residues 689–820 (PTEF…LKKL) and 816–965 (KLKK…VASK) contribute to the a nucleoside 3',5'-cyclic phosphate site. The PNPLA domain occupies 1239–1403 (LVLGGGGSRG…LDNLPVSEMK (165 aa)). The GXGXXG signature appears at 1243–1248 (GGGSRG). Positions 1270–1274 (GTSIG) match the GXSXG motif. The active-site Nucleophile is the S1272. D1390 (proton acceptor) is an active-site residue. The DGA/G signature appears at 1390–1392 (DGG).

Belongs to the NTE family.

The protein resides in the endoplasmic reticulum membrane. It catalyses the reaction a 1-acyl-sn-glycero-3-phosphocholine + H2O = sn-glycerol 3-phosphocholine + a fatty acid + H(+). With respect to regulation, inhibited by organophosphorus esters. Its function is as follows. Intracellular phospholipase B that catalyzes the double deacylation of phosphatidylcholine (PC) to glycerophosphocholine (GroPCho). Plays an important role in membrane lipid homeostasis. Responsible for the rapid PC turnover in response to inositol, elevated temperatures, or when choline is present in the growth medium. This Scheffersomyces stipitis (strain ATCC 58785 / CBS 6054 / NBRC 10063 / NRRL Y-11545) (Yeast) protein is Lysophospholipase NTE1 (NTE1).